Reading from the N-terminus, the 166-residue chain is Small ribosomal subunit protein uS5 (166 aa).

Residues 11–74 (LQEKLIAVNR…EKARRNMMNV (64 aa)) enclose the S5 DRBM domain.

Belongs to the universal ribosomal protein uS5 family. As to quaternary structure, part of the 30S ribosomal subunit. Contacts proteins S4 and S8.

Its function is as follows. With S4 and S12 plays an important role in translational accuracy. Located at the back of the 30S subunit body where it stabilizes the conformation of the head with respect to the body. This is Small ribosomal subunit protein uS5 from Pectobacterium atrosepticum (strain SCRI 1043 / ATCC BAA-672) (Erwinia carotovora subsp. atroseptica).